Consider the following 235-residue polypeptide: Small ribosomal subunit protein eS4 (235 aa).

Positions 38–99 (VTLLSIIRDY…GESYRVVYND (62 aa)) constitute an S4 RNA-binding domain.

This sequence belongs to the eukaryotic ribosomal protein eS4 family.

The chain is Small ribosomal subunit protein eS4 (rps4e) from Thermoplasma acidophilum (strain ATCC 25905 / DSM 1728 / JCM 9062 / NBRC 15155 / AMRC-C165).